A 304-amino-acid chain; its full sequence is Homoserine O-acetyltransferase (304 aa).

Cys142 (acyl-thioester intermediate) is an active-site residue. Residues Lys163 and Ser192 each contribute to the substrate site. The active-site Proton acceptor is His235. The active site involves Glu237. Position 249 (Arg249) interacts with substrate.

The protein belongs to the MetA family.

It is found in the cytoplasm. The catalysed reaction is L-homoserine + acetyl-CoA = O-acetyl-L-homoserine + CoA. Its pathway is amino-acid biosynthesis; L-methionine biosynthesis via de novo pathway; O-acetyl-L-homoserine from L-homoserine: step 1/1. Its function is as follows. Transfers an acetyl group from acetyl-CoA to L-homoserine, forming acetyl-L-homoserine. This chain is Homoserine O-acetyltransferase, found in Clostridium beijerinckii (strain ATCC 51743 / NCIMB 8052) (Clostridium acetobutylicum).